Consider the following 662-residue polypeptide: Acetyl-coenzyme A synthetase (662 aa).

Residues 197 to 200 and Thr-317 contribute to the CoA site; that span reads RKGK. Residues 393-395, 417-422, Asp-510, and Arg-525 contribute to the ATP site; these read GEP and DTWWQT. Ser-533 provides a ligand contact to CoA. Arg-536 is an ATP binding site. His-549 and Val-552 together coordinate Mg(2+). Lys-623 carries the post-translational modification N6-acetyllysine.

The protein belongs to the ATP-dependent AMP-binding enzyme family. It depends on Mg(2+) as a cofactor. Acetylated. Deacetylation by the SIR2-homolog deacetylase activates the enzyme.

The catalysed reaction is acetate + ATP + CoA = acetyl-CoA + AMP + diphosphate. Its function is as follows. Catalyzes the conversion of acetate into acetyl-CoA (AcCoA), an essential intermediate at the junction of anabolic and catabolic pathways. AcsA undergoes a two-step reaction. In the first half reaction, AcsA combines acetate with ATP to form acetyl-adenylate (AcAMP) intermediate. In the second half reaction, it can then transfer the acetyl group from AcAMP to the sulfhydryl group of CoA, forming the product AcCoA. In Helicobacter pylori (strain P12), this protein is Acetyl-coenzyme A synthetase.